Reading from the N-terminus, the 201-residue chain is MELVLKDAQSALEVSETTFGREFNEALVHQVVVAYAAGARQGTRAQKTRSDVSGGGKKPWRQKGTGRARSGTIRSPIWVGGGVTFAARPQDHSQKVNKKMYRGAVKSILSELVRQDRLIVVEKFSVEAPKTQELKAKLKELDLKDVLIITEELDENLFLAARNLYKVDVRDVQGIDPVSLIAFDKVLVTAAAVKKIEESLT.

Residues 43–71 (TRAQKTRSDVSGGGKKPWRQKGTGRARSG) are disordered.

This sequence belongs to the universal ribosomal protein uL4 family. Part of the 50S ribosomal subunit.

Its function is as follows. One of the primary rRNA binding proteins, this protein initially binds near the 5'-end of the 23S rRNA. It is important during the early stages of 50S assembly. It makes multiple contacts with different domains of the 23S rRNA in the assembled 50S subunit and ribosome. In terms of biological role, forms part of the polypeptide exit tunnel. The protein is Large ribosomal subunit protein uL4 of Psychromonas ingrahamii (strain DSM 17664 / CCUG 51855 / 37).